We begin with the raw amino-acid sequence, 344 residues long: N-acetyl-gamma-glutamyl-phosphate reductase (344 aa).

C148 is an active-site residue.

Belongs to the NAGSA dehydrogenase family. Type 1 subfamily.

The protein localises to the cytoplasm. It catalyses the reaction N-acetyl-L-glutamate 5-semialdehyde + phosphate + NADP(+) = N-acetyl-L-glutamyl 5-phosphate + NADPH + H(+). The protein operates within amino-acid biosynthesis; L-arginine biosynthesis; N(2)-acetyl-L-ornithine from L-glutamate: step 3/4. Catalyzes the NADPH-dependent reduction of N-acetyl-5-glutamyl phosphate to yield N-acetyl-L-glutamate 5-semialdehyde. The chain is N-acetyl-gamma-glutamyl-phosphate reductase from Geobacillus kaustophilus (strain HTA426).